The sequence spans 348 residues: Dihydroorotase (348 aa).

The Zn(2+) site is built by H17 and H19. Substrate contacts are provided by residues 19–21 and N45; that span reads HLR. K103, H140, and H178 together coordinate Zn(2+). Position 103 is an N6-carboxylysine (K103). H140 contacts substrate. L223 contributes to the substrate binding site. D251 is a Zn(2+) binding site. D251 is an active-site residue. Substrate-binding residues include H255 and A267.

Belongs to the metallo-dependent hydrolases superfamily. DHOase family. Class II DHOase subfamily. In terms of assembly, homodimer. It depends on Zn(2+) as a cofactor.

The catalysed reaction is (S)-dihydroorotate + H2O = N-carbamoyl-L-aspartate + H(+). The protein operates within pyrimidine metabolism; UMP biosynthesis via de novo pathway; (S)-dihydroorotate from bicarbonate: step 3/3. Functionally, catalyzes the reversible cyclization of carbamoyl aspartate to dihydroorotate. The chain is Dihydroorotase from Shigella boydii serotype 4 (strain Sb227).